Consider the following 307-residue polypeptide: Nucleotide-binding protein Sca_0414 (307 aa).

Position 19–26 (19–26 (GMSGAGKS)) interacts with ATP. 70-73 (DLRG) contributes to the GTP binding site.

Belongs to the RapZ-like family.

Its function is as follows. Displays ATPase and GTPase activities. The polypeptide is Nucleotide-binding protein Sca_0414 (Staphylococcus carnosus (strain TM300)).